Here is a 117-residue protein sequence, read N- to C-terminus: Anti-adapter protein IraM (117 aa).

Belongs to the IraM/RssC family.

Its subcellular location is the cytoplasm. In terms of biological role, involved in the stabilization of the sigma stress factor RpoS. This Klebsiella pneumoniae (strain 342) protein is Anti-adapter protein IraM.